Here is a 577-residue protein sequence, read N- to C-terminus: Insulin-like growth factor 2 mRNA-binding protein 1 (577 aa).

RRM domains lie at 2–75 and 81–156; these read NKLY…HSVP and RKIQ…YIPD. Phosphoserine is present on residues Ser12 and Ser73. A disordered region spans residues 156-190; that stretch reads DEQITQGPENGRRGGFGSRGQPRQGSPVAAGAPAK. Ser181 carries the phosphoserine; by MTOR modification. KH domains lie at 195 to 260, 276 to 343, 405 to 470, and 487 to 553; these read DIPL…CKMI, EVPL…EQEI, QEMV…QGRI, and KLET…QRKI. Residues 312-323 are sufficient for nuclear export; that stretch reads ISSLQDLTLYNP. The tract at residues 485–495 is sufficient for nuclear export; it reads EVKLETHIRVP. Position 528 is a phosphothreonine (Thr528).

Belongs to the RRM IMP/VICKZ family. Can form homodimers and heterodimers with IGF2BP1 and IGF2BP3. Component of the coding region determinant (CRD)-mediated complex, composed of DHX9, HNRNPU, IGF2BP1, SYNCRIP and YBX1. Identified in a mRNP complex, at least composed of DHX9, DDX3X, ELAVL1, HNRNPU, IGF2BP1, ILF3, PABPC1, PCBP2, PTBP2, STAU1, STAU2, SYNCRIP and YBX1. Associates with mRNP complex. Interacts with FMR1. Component of a multisubunit autoregulatory RNP complex (ARC), at least composed of IGF2BP1, PABPC1 and CSDE1. Interacts with AGO1 and AGO2. Interacts, through domains KH3 and KH4, with PABPC1 in an RNA-independent manner. Component of a TAU mRNP complex, at least composed of IGF2BP1, ELAVL4 and G3BP. Interacts with ELAVL4 in an RNA-dependent manner. Associates with microtubules and polysomes. Interacts with ELAVL1 and MATR3. Post-translationally, phosphorylated at Ser-181 by mTORC2 cotranslationally, promoting binding to the 3'-UTR of IGF2 mRNA. Expressed in zygotes and blastocysts (at protein level). Expressed in brain, skeletal muscle, trophoblasts of placenta, oocytes and spermatogonia (at protein level). Expressed in testis and ovary. Following colon injury, expressed in the wound bed mesenchyme during the first phase of repair, probably by colonic mesenchymal stem cells (at protein level).

The protein resides in the nucleus. It localises to the cytoplasm. Its subcellular location is the perinuclear region. It is found in the P-body. The protein localises to the stress granule. The protein resides in the cell projection. It localises to the lamellipodium. Its subcellular location is the dendrite. It is found in the dendritic spine. The protein localises to the growth cone. The protein resides in the filopodium. It localises to the axon. Functionally, RNA-binding factor that recruits target transcripts to cytoplasmic protein-RNA complexes (mRNPs). This transcript 'caging' into mRNPs allows mRNA transport and transient storage. It also modulates the rate and location at which target transcripts encounter the translational apparatus and shields them from endonuclease attacks or microRNA-mediated degradation. Preferentially binds to N6-methyladenosine (m6A)-containing mRNAs and increases their stability. Regulates localized beta-actin/ACTB mRNA translation, a crucial process for cell polarity, cell migration and neurite outgrowth. Co-transcriptionally associates with the ACTB mRNA in the nucleus. This binding involves a conserved 54-nucleotide element in the ACTB mRNA 3'-UTR, known as the 'zipcode'. The RNP thus formed is exported to the cytoplasm, binds to a motor protein and is transported along the cytoskeleton to the cell periphery. During transport, prevents ACTB mRNA from being translated into protein. When the RNP complex reaches its destination near the plasma membrane, IGF2BP1 is phosphorylated. This releases the mRNA, allowing ribosomal 40S and 60S subunits to assemble and initiate ACTB protein synthesis. Monomeric ACTB then assembles into the subcortical actin cytoskeleton. During neuronal development, key regulator of neurite outgrowth, growth cone guidance and neuronal cell migration, presumably through the spatiotemporal fine tuning of protein synthesis, such as that of ACTB. May regulate mRNA transport to activated synapses. Binds to the 3'-UTR of CD44 mRNA and stabilizes it, hence promotes cell adhesion and invadopodia formation in cancer cells. Binds to the oncofetal H19 transcript and regulates its localization. Binds to and stabilizes BTRC/FBW1A mRNA. Binds to the adenine-rich autoregulatory sequence (ARS) located in PABPC1 mRNA and represses its translation. PABPC1 mRNA-binding is stimulated by PABPC1 protein. Prevents BTRC/FBW1A mRNA degradation by disrupting microRNA-dependent interaction with AGO2. During cellular stress, such as oxidative stress or heat shock, stabilizes target mRNAs that are recruited to stress granules, including CD44, IGF2, MAPK4, MYC, PTEN, RAPGEF2 and RPS6KA5 transcripts. Interacts with GAP43 transcript and transports it to axons. Binds to the 3'-UTR of IGF2 mRNA by a mechanism of cooperative and sequential dimerization and regulates IGF2 mRNA subcellular localization and translation. Binds to MYC mRNA, in the coding region instability determinant (CRD) of the open reading frame (ORF), hence prevents MYC cleavage by endonucleases and possibly microRNA targeting to MYC-CRD. Binding to MYC mRNA is enhanced by m6A-modification of the CRD. Binds to and stabilizes ABCB1/MDR-1 mRNA. Binds to the neuron-specific TAU mRNA and regulates its localization. Plays a direct role in the transport and translation of transcripts required for axonal regeneration in adult sensory neurons. During interstinal wound repair, interacts with and stabilizes PTGS2 transcript. PTGS2 mRNA stabilization may be crucial for colonic mucosal wound healing. The protein is Insulin-like growth factor 2 mRNA-binding protein 1 (Igf2bp1) of Mus musculus (Mouse).